The primary structure comprises 122 residues: Large ribosomal subunit protein uL14 (122 aa).

The protein belongs to the universal ribosomal protein uL14 family. As to quaternary structure, part of the 50S ribosomal subunit. Forms a cluster with proteins L3 and L19. In the 70S ribosome, L14 and L19 interact and together make contacts with the 16S rRNA in bridges B5 and B8.

Binds to 23S rRNA. Forms part of two intersubunit bridges in the 70S ribosome. This chain is Large ribosomal subunit protein uL14, found in Shewanella frigidimarina (strain NCIMB 400).